A 506-amino-acid polypeptide reads, in one-letter code: Probable lipid II flippase MurJ (506 aa).

Helical transmembrane passes span 4-24 (YVVS…MGFV), 86-106 (TVIT…IIFA), 127-147 (VFGY…FVSV), 153-173 (IFFI…LSIF), 181-201 (IYSA…IPFA), 232-252 (IFGF…ASTL), 263-283 (AVVY…TVIF), 308-328 (ILLL…DYIL), 345-365 (TASV…FGFF), 377-397 (TPFY…VFGI), 405-425 (LALA…FIIL), 436-456 (ILFV…IYFF), and 474-494 (LMAA…VLGI).

The protein belongs to the MurJ/MviN family.

It localises to the cell inner membrane. The protein operates within cell wall biogenesis; peptidoglycan biosynthesis. Functionally, involved in peptidoglycan biosynthesis. Transports lipid-linked peptidoglycan precursors from the inner to the outer leaflet of the cytoplasmic membrane. In Borreliella burgdorferi (strain ATCC 35210 / DSM 4680 / CIP 102532 / B31) (Borrelia burgdorferi), this protein is Probable lipid II flippase MurJ.